The following is an 84-amino-acid chain: Small ribosomal subunit protein eS27 (84 aa).

Residues Met-1–Lys-16 show a composition bias toward basic and acidic residues. Residues Met-1–Val-25 are disordered. Ser-11 bears the Phosphoserine mark. Residues Pro-38 to Ser-60 form a C4-type zinc finger.

The protein belongs to the eukaryotic ribosomal protein eS27 family. As to quaternary structure, component of the small ribosomal subunit. Part of the small subunit (SSU) processome, composed of more than 70 proteins and the RNA chaperone small nucleolar RNA (snoRNA) U3. The cofactor is Zn(2+).

The protein resides in the cytoplasm. It localises to the nucleus. The protein localises to the nucleolus. Its function is as follows. Component of the small ribosomal subunit. The ribosome is a large ribonucleoprotein complex responsible for the synthesis of proteins in the cell. Required for proper rRNA processing and maturation of 18S rRNAs. Part of the small subunit (SSU) processome, first precursor of the small eukaryotic ribosomal subunit. During the assembly of the SSU processome in the nucleolus, many ribosome biogenesis factors, an RNA chaperone and ribosomal proteins associate with the nascent pre-rRNA and work in concert to generate RNA folding, modifications, rearrangements and cleavage as well as targeted degradation of pre-ribosomal RNA by the RNA exosome. This chain is Small ribosomal subunit protein eS27 (RPS27), found in Pongo abelii (Sumatran orangutan).